The primary structure comprises 93 residues: CRISPR-associated endoribonuclease Cas2 (93 aa).

Position 8 (aspartate 8) interacts with Mg(2+).

This sequence belongs to the CRISPR-associated endoribonuclease Cas2 protein family. In terms of assembly, homodimer, forms a heterotetramer with a Cas1 homodimer. Mg(2+) serves as cofactor.

CRISPR (clustered regularly interspaced short palindromic repeat), is an adaptive immune system that provides protection against mobile genetic elements (viruses, transposable elements and conjugative plasmids). CRISPR clusters contain sequences complementary to antecedent mobile elements and target invading nucleic acids. CRISPR clusters are transcribed and processed into CRISPR RNA (crRNA). Functions as a ssRNA-specific endoribonuclease. Involved in the integration of spacer DNA into the CRISPR cassette. The chain is CRISPR-associated endoribonuclease Cas2 from Thermofilum pendens (strain DSM 2475 / Hrk 5).